Reading from the N-terminus, the 133-residue chain is Cytidine deaminase (133 aa).

One can recognise a CMP/dCMP-type deaminase domain in the interval 4 to 126 (VDWNMLRGNA…DLLPDAFGLD (123 aa)). 45–47 (NVE) contributes to the substrate binding site. Zn(2+) is bound at residue C56. E58 functions as the Proton donor in the catalytic mechanism. 2 residues coordinate Zn(2+): C89 and C92.

This sequence belongs to the cytidine and deoxycytidylate deaminase family. As to quaternary structure, homotetramer. The cofactor is Zn(2+).

The catalysed reaction is cytidine + H2O + H(+) = uridine + NH4(+). It carries out the reaction 2'-deoxycytidine + H2O + H(+) = 2'-deoxyuridine + NH4(+). In terms of biological role, recycles cytidine and 2-deoxycytidine for uridine and 2-deoxyuridine synthesis, respectively. Catalyzes the hydrolytic deamination of cytidine and 2-deoxycytidine to form, respectively, uridine and 2-deoxyuridine. The polypeptide is Cytidine deaminase (cdd) (Mycobacterium tuberculosis (strain CDC 1551 / Oshkosh)).